The sequence spans 506 residues: Mitogen-activated protein kinase 13 (506 aa).

In terms of domain architecture, Protein kinase spans 13 to 304 (YQIQEVVGKG…AEEALADPYF (292 aa)). Residues 19–27 (VGKGSYGVV) and Lys-42 contribute to the ATP site. Catalysis depends on Asp-139, which acts as the Proton acceptor. The residue at position 175 (Thr-175) is a Phosphothreonine. The TXY signature appears at 175 to 177 (TDY). A Phosphotyrosine modification is found at Tyr-177. The tract at residues 384–421 (YSRGERSTPLRRQHASLPRERVCSSVDSNNQDSDNEER) is disordered.

The protein belongs to the protein kinase superfamily. CMGC Ser/Thr protein kinase family. MAP kinase subfamily. Post-translationally, dually phosphorylated on Thr-175 and Tyr-177, which activates the enzyme.

It catalyses the reaction L-seryl-[protein] + ATP = O-phospho-L-seryl-[protein] + ADP + H(+). The enzyme catalyses L-threonyl-[protein] + ATP = O-phospho-L-threonyl-[protein] + ADP + H(+). Activated by threonine and tyrosine phosphorylation. This is Mitogen-activated protein kinase 13 (MPK13) from Oryza sativa subsp. indica (Rice).